The chain runs to 220 residues: MELYLDTANVAEVERLARIFPIAGVTTNPSIVAASKESIWDVLPRLQNAIGEEGTLFAQTMSRDAKGMVEEAKRLNNAIPGIVVKIPVTAEGLAAIKQLKKEGIVTLGTAVYSASQGLLAALAGAKYVAPYVNRVDAQGGDGIRMVQELQTLLERHAPDSMVLAASFKTPRQALDCLLAGCQAITLPLDVAQQMLNTPAVESAIEKFEQDWKNAFGNLNL.

K85 serves as the catalytic Schiff-base intermediate with substrate.

The protein belongs to the transaldolase family. Type 3A subfamily. In terms of assembly, homodecamer.

The protein resides in the cytoplasm. It carries out the reaction beta-D-fructose 6-phosphate = dihydroxyacetone + D-glyceraldehyde 3-phosphate. Its function is as follows. Catalyzes the reversible formation of fructose 6-phosphate from dihydroxyacetone and D-glyceraldehyde 3-phosphate via an aldolization reaction. This Salmonella arizonae (strain ATCC BAA-731 / CDC346-86 / RSK2980) protein is Fructose-6-phosphate aldolase.